A 448-amino-acid polypeptide reads, in one-letter code: Squalene synthase ERG9 (448 aa).

The chain crosses the membrane as a helical span at residues 428–448 (CNVVLFGIGALILSLIYFVLY).

Belongs to the phytoene/squalene synthase family. It depends on Mg(2+) as a cofactor.

The protein localises to the endoplasmic reticulum membrane. Its subcellular location is the microsome. The catalysed reaction is 2 (2E,6E)-farnesyl diphosphate + NADPH + H(+) = squalene + 2 diphosphate + NADP(+). The enzyme catalyses 2 (2E,6E)-farnesyl diphosphate + NADH + H(+) = squalene + 2 diphosphate + NAD(+). Its pathway is terpene metabolism; lanosterol biosynthesis; lanosterol from farnesyl diphosphate: step 1/3. Functionally, squalene synthase; part of the third module of ergosterol biosynthesis pathway that includes the late steps of the pathway. ERG9 produces squalene from 2 farnesyl pyrophosphate moieties. The third module or late pathway involves the ergosterol synthesis itself through consecutive reactions that mainly occur in the endoplasmic reticulum (ER) membrane. Firstly, the squalene synthase ERG9 catalyzes the condensation of 2 farnesyl pyrophosphate moieties to form squalene, which is the precursor of all steroids. Squalene synthase is crucial for balancing the incorporation of farnesyl diphosphate (FPP) into sterol and nonsterol isoprene synthesis. Secondly, the squalene epoxidase ERG1 catalyzes the stereospecific oxidation of squalene to (S)-2,3-epoxysqualene, which is considered to be a rate-limiting enzyme in steroid biosynthesis. Then, the lanosterol synthase ERG7 catalyzes the cyclization of (S)-2,3 oxidosqualene to lanosterol, a reaction that forms the sterol core. In the next steps, lanosterol is transformed to zymosterol through a complex process involving various demethylation, reduction and desaturation reactions. The lanosterol 14-alpha-demethylase ERG11 (also known as CYP51) catalyzes C14-demethylation of lanosterol to produce 4,4'-dimethyl cholesta-8,14,24-triene-3-beta-ol, which is critical for ergosterol biosynthesis. The C-14 reductase ERG24 reduces the C14=C15 double bond of 4,4-dimethyl-cholesta-8,14,24-trienol to produce 4,4-dimethyl-cholesta-8,24-dienol. 4,4-dimethyl-cholesta-8,24-dienol is substrate of the C-4 demethylation complex ERG25-ERG26-ERG27 in which ERG25 catalyzes the three-step monooxygenation required for the demethylation of 4,4-dimethyl and 4alpha-methylsterols, ERG26 catalyzes the oxidative decarboxylation that results in a reduction of the 3-beta-hydroxy group at the C-3 carbon to an oxo group, and ERG27 is responsible for the reduction of the keto group on the C-3. ERG28 has a role as a scaffold to help anchor ERG25, ERG26 and ERG27 to the endoplasmic reticulum and ERG29 regulates the activity of the iron-containing C4-methylsterol oxidase ERG25. Then, the sterol 24-C-methyltransferase ERG6 catalyzes the methyl transfer from S-adenosyl-methionine to the C-24 of zymosterol to form fecosterol. The C-8 sterol isomerase ERG2 catalyzes the reaction which results in unsaturation at C-7 in the B ring of sterols and thus converts fecosterol to episterol. The sterol-C5-desaturase ERG3 then catalyzes the introduction of a C-5 double bond in the B ring to produce 5-dehydroepisterol. The C-22 sterol desaturase ERG5 further converts 5-dehydroepisterol into ergosta-5,7,22,24(28)-tetraen-3beta-ol by forming the C-22(23) double bond in the sterol side chain. Finally, ergosta-5,7,22,24(28)-tetraen-3beta-ol is substrate of the C-24(28) sterol reductase ERG4 to produce ergosterol. This chain is Squalene synthase ERG9, found in Candida albicans (strain SC5314 / ATCC MYA-2876) (Yeast).